An 84-amino-acid polypeptide reads, in one-letter code: MPTPLLPLLLRLLLSCLLLPAARLARQYLLPLLRRLARRLGSQDMREALLGCLLFILSQRHSPDAGEASRVDRLERRERLGPQK.

Over 1-4 (MPTP) the chain is Cytoplasmic. A helical membrane pass occupies residues 5 to 25 (LLPLLLRLLLSCLLLPAARLA). Topologically, residues 26-84 (RQYLLPLLRRLARRLGSQDMREALLGCLLFILSQRHSPDAGEASRVDRLERRERLGPQK) are extracellular. Residues 48-57 (ALLGCLLFIL) carry the AxLyCxL motif. The segment at 62–84 (SPDAGEASRVDRLERRERLGPQK) is disordered.

Belongs to the MYMX family. In terms of assembly, interacts with MYMK.

Its subcellular location is the cell membrane. In terms of biological role, myoblast-specific protein that mediates myoblast fusion, an essential step for the formation of multi-nucleated muscle fibers. Involved in membrane fusion downstream of the lipid mixing step mediated by MYMK. Acts by generating membrane stresses via its extracellular C-terminus, leading to drive fusion pore formation. Acts independently of MYMK. Involved in skeletal muscle regeneration in response to injury by mediating the fusion of satellite cells, a population of muscle stem cells, with injured myofibers. The chain is Protein myomixer from Homo sapiens (Human).